A 241-amino-acid polypeptide reads, in one-letter code: 2,3,4,5-tetrahydropyridine-2,6-dicarboxylate N-acetyltransferase (241 aa).

The protein belongs to the transferase hexapeptide repeat family. DapH subfamily.

The enzyme catalyses (S)-2,3,4,5-tetrahydrodipicolinate + acetyl-CoA + H2O = L-2-acetamido-6-oxoheptanedioate + CoA. It functions in the pathway amino-acid biosynthesis; L-lysine biosynthesis via DAP pathway; LL-2,6-diaminopimelate from (S)-tetrahydrodipicolinate (acetylase route): step 1/3. In terms of biological role, catalyzes the transfer of an acetyl group from acetyl-CoA to tetrahydrodipicolinate. The sequence is that of 2,3,4,5-tetrahydropyridine-2,6-dicarboxylate N-acetyltransferase from Caldanaerobacter subterraneus subsp. tengcongensis (strain DSM 15242 / JCM 11007 / NBRC 100824 / MB4) (Thermoanaerobacter tengcongensis).